The primary structure comprises 227 residues: Tegument protein ORF55 (227 aa).

Cys11 carries S-palmitoyl cysteine; by host lipidation. Positions 183–227 are disordered; it reads VTRQPEATLPKPPTEDPSVSAMHSSIPPRPSSTLEETTESAIGST. Residues 213-227 show a composition bias toward polar residues; it reads SSTLEETTESAIGST.

It belongs to the herpesviridae UL51 family. As to quaternary structure, oligomerizes. Interacts with ORF42; this interaction mediates ORF42 incorporation to virions. Interacts with vBCL2. In terms of processing, phosphorylated. Palmitoylation is necessary for Golgi localization.

The protein resides in the virion tegument. The protein localises to the host cytoplasm. It is found in the host Golgi apparatus. Plays several roles during the time course of infection, including egress of virus particles from the perinuclear space and secondary envelopment of cytoplasmic capsids that bud into specific trans-Golgi network (TGN)-derived membranes. This chain is Tegument protein ORF55 (ORF55), found in Homo sapiens (Human).